Reading from the N-terminus, the 286-residue chain is MTAKLIDGLALSKTLRADVAARAAALTARGHQPGLAVVLVGDNPASEVYVRNKVKACHDNGLGSSFDRYPADLPEAELLARIDELNRDPRIHGILVQLPLPPHIDSHKVIEAIAPEKDVDGFHVANAGALMTGRPLFRPCTPYGVMKMLAAYEIPLQGANAVVIGRSNIVGKPMALLLLEAGATVTICHSKTRDLAAHTRNADVVVAATGLRNILTAEMVKPGAAVIDVGMNRDDAGKLCGDVDFAGVKEVAGYITPVPGGVGPMTITMLLVNTIEAAEREAAANA.

NADP(+)-binding positions include 165-167 and Ser190; that span reads GRS.

The protein belongs to the tetrahydrofolate dehydrogenase/cyclohydrolase family. In terms of assembly, homodimer.

The catalysed reaction is (6R)-5,10-methylene-5,6,7,8-tetrahydrofolate + NADP(+) = (6R)-5,10-methenyltetrahydrofolate + NADPH. It carries out the reaction (6R)-5,10-methenyltetrahydrofolate + H2O = (6R)-10-formyltetrahydrofolate + H(+). It functions in the pathway one-carbon metabolism; tetrahydrofolate interconversion. Its function is as follows. Catalyzes the oxidation of 5,10-methylenetetrahydrofolate to 5,10-methenyltetrahydrofolate and then the hydrolysis of 5,10-methenyltetrahydrofolate to 10-formyltetrahydrofolate. This Paraburkholderia phytofirmans (strain DSM 17436 / LMG 22146 / PsJN) (Burkholderia phytofirmans) protein is Bifunctional protein FolD.